A 473-amino-acid polypeptide reads, in one-letter code: Uronate isomerase (473 aa).

It belongs to the metallo-dependent hydrolases superfamily. Uronate isomerase family.

It carries out the reaction D-glucuronate = D-fructuronate. The enzyme catalyses aldehydo-D-galacturonate = keto-D-tagaturonate. It functions in the pathway carbohydrate metabolism; pentose and glucuronate interconversion. The protein is Uronate isomerase (uxaC) of Bacillus subtilis (strain 168).